The primary structure comprises 637 residues: MDLLTRIKGPRDLDRLSLGELDQLAQEIRTFLVDAVSKTGGHLGPNLGVVELTIALHRVFESPRDKVLWDTGHQSYVHKLLTGRQDFSRLKSKGGLSGYPSRAESDHDVIENSHASGVLGWADGMAKANEVLRKDDHVVAVIGDGALTGGMAWEALNNIAAAKDRPLVIVVNDNERSYAPTIGGLANHLATLRTTDGYERFLARGKDILERTPVVGRPLYETLHGAKKGLKDFIAPQGMFEDLGLKYVGPIDGHDIEALESALQRAKRFRGPVIVHCLTEKGRGYTPALEDEADRFHAVGKIHPDTGLPISTSGLDWTSVFGEEMVKLGEEREDIVAITAAMLQPVGLGKFEAAFPDRIYDVGIAEQHGAASAAGLATGGLHPVFAVYATFLNRAFDQVLMDVALHKCGVTFVLDRAGITGTDGASHNGMWDMSILQCVPTLRIAAPRDADQVRAQLREAVAVDDAPTVVRFSKGAVGPAVKAVGRAGGMDILRRPTAARPDVLIVSVGALAPMCLEIADLLDAQGISSTVVDPRWVKPVDEALAPLAERHRVVVTVEDNSRAGGVGSAVAQSLRDAGVDVPLRDFGIPPVFLDHASRGEVMAEIGLTAPDIARQVTGLVAKLDGRFESRAVEPARD.

Thiamine diphosphate contacts are provided by residues H73 and 113–115 (SHA). D144 contacts Mg(2+). Thiamine diphosphate is bound by residues 145 to 146 (GA), N174, Y285, and E366. N174 is a Mg(2+) binding site.

It belongs to the transketolase family. DXPS subfamily. Homodimer. It depends on Mg(2+) as a cofactor. Requires thiamine diphosphate as cofactor.

The catalysed reaction is D-glyceraldehyde 3-phosphate + pyruvate + H(+) = 1-deoxy-D-xylulose 5-phosphate + CO2. It participates in metabolic intermediate biosynthesis; 1-deoxy-D-xylulose 5-phosphate biosynthesis; 1-deoxy-D-xylulose 5-phosphate from D-glyceraldehyde 3-phosphate and pyruvate: step 1/1. In terms of biological role, catalyzes the acyloin condensation reaction between C atoms 2 and 3 of pyruvate and glyceraldehyde 3-phosphate to yield 1-deoxy-D-xylulose-5-phosphate (DXP). The sequence is that of 1-deoxy-D-xylulose-5-phosphate synthase from Streptomyces griseus subsp. griseus (strain JCM 4626 / CBS 651.72 / NBRC 13350 / KCC S-0626 / ISP 5235).